A 450-amino-acid polypeptide reads, in one-letter code: Tubulin beta-2 chain (450 aa).

Residues Gln11, Glu69, Ser138, Gly142, Thr143, Gly144, Asn204, and Asn226 each contribute to the GTP site. Glu69 provides a ligand contact to Mg(2+). The interval 428–450 (ATAEDDVDGYAEGEAGETYESEQ) is disordered. The span at 429–450 (TAEDDVDGYAEGEAGETYESEQ) shows a compositional bias: acidic residues.

Belongs to the tubulin family. Dimer of alpha and beta chains. A typical microtubule is a hollow water-filled tube with an outer diameter of 25 nm and an inner diameter of 15 nm. Alpha-beta heterodimers associate head-to-tail to form protofilaments running lengthwise along the microtubule wall with the beta-tubulin subunit facing the microtubule plus end conferring a structural polarity. Microtubules usually have 13 protofilaments but different protofilament numbers can be found in some organisms and specialized cells. It depends on Mg(2+) as a cofactor. Cleaved by caspase ced-3 in vitro.

It localises to the cytoplasm. The protein resides in the cytoskeleton. In terms of biological role, tubulin is the major constituent of microtubules, a cylinder consisting of laterally associated linear protofilaments composed of alpha- and beta-tubulin heterodimers. Microtubules grow by the addition of GTP-tubulin dimers to the microtubule end, where a stabilizing cap forms. Below the cap, tubulin dimers are in GDP-bound state, owing to GTPase activity of alpha-tubulin. Required for the normal dynamic behavior of the non-centrosomal microtubules in the epidermal syncytium. Involved in the redistribution of microtubule end-binding protein EB1/ebp-2 caused by wounding. Required to modulate expression in the epidermis of antimicrobial peptides, such as nlp-29, after wounding, or fungal infection. The chain is Tubulin beta-2 chain (tbb-2) from Caenorhabditis elegans.